The sequence spans 325 residues: Helicase VP6-A (325 aa).

Disordered stretches follow at residues M1–R126 and G175–I231. 4 stretches are compositionally biased toward basic and acidic residues: residues V8–Q18, E32–E54, G61–I79, and P92–G105. K106 lines the ATP pocket. Positions K106 to G122 are enriched in gly residues. The segment covering G175–A229 has biased composition (basic and acidic residues).

Belongs to the orbivirus VP6 family. Homohexamer.

The protein localises to the virion. The enzyme catalyses ATP + H2O = ADP + phosphate + H(+). In terms of biological role, ATP dependent RNA helicase essential for RNA packaging and viral transcription. Possesses ss- and dsRNA-binding capacity. This chain is Helicase VP6-A (Segment-9), found in Bluetongue virus 11 (isolate USA) (BTV 11).